A 188-amino-acid polypeptide reads, in one-letter code: MKVGLVYYGGQYNHLILKNVKYLGADIEVIPPHKPVEELKKFDCVIFSGGPYSVSEEIQKMGNSPLYIKELKVPMLGICLGHQLIAYVLGGVVRRALNPEYGLTRINIFDEDTILKGFSQQLNVWESHNDEVVEPPSGFRVLASSANARVQAMANSSNSIFGVQFHPEVKHTERGIEIFKNFLGVCRK.

Residues 2–188 enclose the Glutamine amidotransferase type-1 domain; it reads KVGLVYYGGQ…FKNFLGVCRK (187 aa). Cysteine 79 serves as the catalytic Nucleophile. Active-site residues include histidine 166 and glutamate 168.

Heterodimer composed of a glutamine amidotransferase subunit (A) and a GMP-binding subunit (B).

It carries out the reaction XMP + L-glutamine + ATP + H2O = GMP + L-glutamate + AMP + diphosphate + 2 H(+). Its pathway is purine metabolism; GMP biosynthesis; GMP from XMP (L-Gln route): step 1/1. Functionally, catalyzes the synthesis of GMP from XMP. The chain is GMP synthase [glutamine-hydrolyzing] subunit A from Saccharolobus solfataricus (strain ATCC 35092 / DSM 1617 / JCM 11322 / P2) (Sulfolobus solfataricus).